Reading from the N-terminus, the 196-residue chain is Protein TEX261 (196 aa).

5 consecutive transmembrane segments (helical) span residues 3 to 23 (FMYL…TLAV), 42 to 62 (SRII…LYVF), 70 to 90 (IGVG…FPFI), 97 to 117 (FILS…FFAE), and 125 to 145 (VLAY…VSLS).

Belongs to the SVP26 family.

The protein localises to the membrane. The polypeptide is Protein TEX261 (TEX261) (Homo sapiens (Human)).